The primary structure comprises 194 residues: Adenylate kinase (194 aa).

11–16 (GSGKGT) serves as a coordination point for ATP. An NMP region spans residues 31 to 60 (STGELLRAEIKAQTELGQAAAGYINEGHLV). AMP contacts are provided by residues T32, R37, 58-60 (HLV), 86-89 (GFPR), and Q93. The LID stretch occupies residues 127–137 (NRGKVSGRSDD). R128 is an ATP binding site. AMP is bound by residues R134 and R145. G173 contributes to the ATP binding site.

It belongs to the adenylate kinase family. In terms of assembly, monomer.

The protein localises to the cytoplasm. The enzyme catalyses AMP + ATP = 2 ADP. It functions in the pathway purine metabolism; AMP biosynthesis via salvage pathway; AMP from ADP: step 1/1. Functionally, catalyzes the reversible transfer of the terminal phosphate group between ATP and AMP. Plays an important role in cellular energy homeostasis and in adenine nucleotide metabolism. This is Adenylate kinase from Porphyromonas gingivalis (strain ATCC BAA-308 / W83).